The chain runs to 122 residues: Large ribosomal subunit protein uL14 (122 aa).

This sequence belongs to the universal ribosomal protein uL14 family. In terms of assembly, part of the 50S ribosomal subunit. Forms a cluster with proteins L3 and L19. In the 70S ribosome, L14 and L19 interact and together make contacts with the 16S rRNA in bridges B5 and B8.

Its function is as follows. Binds to 23S rRNA. Forms part of two intersubunit bridges in the 70S ribosome. The polypeptide is Large ribosomal subunit protein uL14 (Chlamydia trachomatis serovar L2 (strain ATCC VR-902B / DSM 19102 / 434/Bu)).